Consider the following 95-residue polypeptide: UPF0473 protein CD630_12860 (95 aa).

This sequence belongs to the UPF0473 family.

In Clostridioides difficile (strain 630) (Peptoclostridium difficile), this protein is UPF0473 protein CD630_12860.